The sequence spans 408 residues: MARDEHDSRYLTAELPGTGGLFKETPEDFLVEEISLYLPCGEGEHTYAVIEKRGITTLEAIRRLCRATGAPERDTGYAGMKDARGITRQTVSLPRVTPAEVMGLNIPGIRILSADRHRNKLRLGHLAGNRFRLRLRETVPDAADRARAILDVLARRGVPNRFGEQRYGIQGNSHLVGRAMLAGDWRGAVDLLMGDPAKVEGERWRAAIEAYRQGDLAGSLSLFPGHCRTERDVLQRLAKRPDDFERAVHGVHPRLKKLYLSACQSALFDRVLETRLQTIDHVMEGDLAWKHDNGACFLVTDAKAEAPRAERFEISPTGPLFGCRMTSPEGEPAALEKSILDAAGLTPAAFNLAGGLRMEGERRPLRVPLEGPELSCEEEDLVLRFSLPRGSYATAVLREVMKRPGNGA.

The active-site Nucleophile is the Asp-82. The TRUD domain occupies 157 to 367 (GVPNRFGEQR…MEGERRPLRV (211 aa)).

It belongs to the pseudouridine synthase TruD family.

The enzyme catalyses uridine(13) in tRNA = pseudouridine(13) in tRNA. Functionally, responsible for synthesis of pseudouridine from uracil-13 in transfer RNAs. The chain is tRNA pseudouridine synthase D from Geobacter sulfurreducens (strain ATCC 51573 / DSM 12127 / PCA).